We begin with the raw amino-acid sequence, 284 residues long: Dihydropteroate synthase (284 aa).

Residues Val6–Lys265 enclose the Pterin-binding domain. Asn13 contacts Mg(2+). (7,8-dihydropterin-6-yl)methyl diphosphate contacts are provided by residues Thr53, Asp86, Asn105, Asp177, Lys213, and Arg253–His255.

Belongs to the DHPS family. As to quaternary structure, homodimer. Mg(2+) serves as cofactor.

The enzyme catalyses (7,8-dihydropterin-6-yl)methyl diphosphate + 4-aminobenzoate = 7,8-dihydropteroate + diphosphate. The protein operates within cofactor biosynthesis; tetrahydrofolate biosynthesis; 7,8-dihydrofolate from 2-amino-4-hydroxy-6-hydroxymethyl-7,8-dihydropteridine diphosphate and 4-aminobenzoate: step 1/2. With respect to regulation, is potently inhibited by the sulfone dapsone and the two sulfonamides sulfamethoxazole and sulfamethoxypyridazine, with Kis in the range of 12 to 32 nM. To a lesser extent, is also inhibited by p-aminosalicylate (PAS). Catalyzes the condensation of para-aminobenzoate (pABA) with 6-hydroxymethyl-7,8-dihydropterin diphosphate (DHPt-PP) to form 7,8-dihydropteroate, the immediate precursor of folate derivatives. This is Dihydropteroate synthase (folP1) from Mycobacterium leprae (strain TN).